Reading from the N-terminus, the 396-residue chain is Phosphoglycerate kinase (396 aa).

Substrate contacts are provided by residues 21 to 23 (DFN), arginine 36, 59 to 62 (HLGK), arginine 119, and arginine 156. ATP is bound by residues lysine 206, glycine 294, glutamate 325, and 352-355 (GGDS).

This sequence belongs to the phosphoglycerate kinase family. Monomer.

Its subcellular location is the cytoplasm. It catalyses the reaction (2R)-3-phosphoglycerate + ATP = (2R)-3-phospho-glyceroyl phosphate + ADP. The protein operates within carbohydrate degradation; glycolysis; pyruvate from D-glyceraldehyde 3-phosphate: step 2/5. This Listeria monocytogenes serotype 4a (strain HCC23) protein is Phosphoglycerate kinase.